Consider the following 229-residue polypeptide: Acetylornithine aminotransferase (229 aa).

Residues 95-96 (GA) and phenylalanine 122 contribute to the pyridoxal 5'-phosphate site. Arginine 125 is a binding site for N(2)-acetyl-L-ornithine. 208–211 (DEIQ) contributes to the pyridoxal 5'-phosphate binding site.

Belongs to the class-III pyridoxal-phosphate-dependent aminotransferase family. ArgD subfamily. Homodimer. Pyridoxal 5'-phosphate is required as a cofactor.

It is found in the cytoplasm. The enzyme catalyses N(2)-acetyl-L-ornithine + 2-oxoglutarate = N-acetyl-L-glutamate 5-semialdehyde + L-glutamate. It functions in the pathway amino-acid biosynthesis; L-arginine biosynthesis; N(2)-acetyl-L-ornithine from L-glutamate: step 4/4. In Bacillus amyloliquefaciens (Bacillus velezensis), this protein is Acetylornithine aminotransferase (argD).